Consider the following 931-residue polypeptide: Aftiphilin (931 aa).

The segment at 1-49 (MEPDIIRMYSSSPPPLDNGAEDDEEDEFGEFGGFSEVSPSGVGFVDFDT) is disordered. Over residues 19-29 (GAEDDEEDEFG) the composition is skewed to acidic residues. Residues 28–31 (FGEF) carry the WXXF motif 1 motif. Residues 33–45 (GFSEVSPSGVGFV) show a composition bias toward low complexity. A Phosphoserine modification is found at Ser-151. Residues 371 to 381 (SVKTSDVNEIG) show a composition bias toward polar residues. The disordered stretch occupies residues 371–454 (SVKTSDVNEI…PFVTSTQDSM (84 aa)). Ser-395 carries the post-translational modification Phosphoserine. Residues 433 to 436 (FGDF) carry the WXXF motif 2 motif. Residues 439–454 (ANGTTPPFVTSTQDSM) are compositionally biased toward polar residues. The WXXF motif 3 signature appears at 476–479 (FGEF). 2 disordered regions span residues 494–561 (TESD…SSAG) and 599–636 (WQSQ…LQEP). Positions 516–530 (GGKDSKPDSKLKNGQ) are enriched in basic and acidic residues. Phosphothreonine is present on Thr-613. Low complexity predominate over residues 618 to 631 (SVSSAASKGAVASG). A CLTCL1/Clathrin-binding motif is present at residues 712–714 (YQW). The tract at residues 821-825 (LLNLD) is clathrin-binding.

In terms of assembly, self-associates. Interacts with GGA1 (via GAE domain). Interacts with GGA3 (via GAE domain), AP1G1 (via GAE domain) and AP1G2 (via GAE domain). Component of the aftiphilin/p200/gamma-synergin complex, at least composed of AFTPH/aftiphilin, HEATR5B/p200a and SYNRG/gamma-synergin, which plays a role in the AP1G1/AP-1-mediated protein trafficking from early to recycling endosomes. Within the complex interacts with HEATR5B/p200a and SYNRG/gamma-synergin; the interactions are direct. Interacts with AP1G1/AP-1; the interaction is required to recruit AFTPH/aftiphilin to the perinuclear region of the cell. Interacts with CLTCL1/Clathrin.

Its subcellular location is the cytoplasm. It is found in the perinuclear region. It localises to the cytoplasmic vesicle. The protein resides in the clathrin-coated vesicle. Functionally, component of clathrin-coated vesicles. Component of the aftiphilin/p200/gamma-synergin complex, which plays roles in AP1G1/AP-1-mediated protein trafficking including the trafficking of transferrin from early to recycling endosomes, and the membrane trafficking of furin and the lysosomal enzyme cathepsin D between the trans-Golgi network (TGN) and endosomes. In Mus musculus (Mouse), this protein is Aftiphilin (Aftph).